We begin with the raw amino-acid sequence, 111 residues long: Large ribosomal subunit protein uL24 (111 aa).

It belongs to the universal ribosomal protein uL24 family. Part of the 50S ribosomal subunit.

Its function is as follows. One of two assembly initiator proteins, it binds directly to the 5'-end of the 23S rRNA, where it nucleates assembly of the 50S subunit. Functionally, one of the proteins that surrounds the polypeptide exit tunnel on the outside of the subunit. This chain is Large ribosomal subunit protein uL24, found in Streptococcus pneumoniae (strain Hungary19A-6).